The sequence spans 348 residues: 4-hydroxy-2-oxovalerate aldolase 1 (348 aa).

The Pyruvate carboxyltransferase domain occupies 8 to 260; it reads ITVHDMTLRD…QTGVDVWAIQ (253 aa). 16 to 17 is a binding site for substrate; the sequence is RD. Residue Asp-17 participates in Mn(2+) binding. His-20 serves as the catalytic Proton acceptor. Substrate-binding residues include Ser-170 and His-199. Residues His-199 and His-201 each coordinate Mn(2+). Tyr-290 contacts substrate.

The protein belongs to the 4-hydroxy-2-oxovalerate aldolase family.

The catalysed reaction is (S)-4-hydroxy-2-oxopentanoate = acetaldehyde + pyruvate. This chain is 4-hydroxy-2-oxovalerate aldolase 1, found in Cupriavidus metallidurans (strain ATCC 43123 / DSM 2839 / NBRC 102507 / CH34) (Ralstonia metallidurans).